The chain runs to 280 residues: NAD-capped RNA hydrolase NudC (280 aa).

Residue R83 participates in substrate binding. Positions 113, 116, 131, and 134 each coordinate Zn(2+). Y139 provides a ligand contact to substrate. In terms of domain architecture, Nudix hydrolase spans 140–268 (PRVAPAIIVL…ASRRLLDDAL (129 aa)). A divalent metal cation is bound by residues A177, E193, and E197. Residues 178 to 199 (GFVEPSETLEAAVHREVGEEVG) carry the Nudix box motif. 211–218 (QPWPFPHS) contributes to the substrate binding site. E238 lines the a divalent metal cation pocket.

It belongs to the Nudix hydrolase family. NudC subfamily. In terms of assembly, homodimer. It depends on Mg(2+) as a cofactor. Requires Mn(2+) as cofactor. The cofactor is Zn(2+).

It carries out the reaction a 5'-end NAD(+)-phospho-ribonucleoside in mRNA + H2O = a 5'-end phospho-adenosine-phospho-ribonucleoside in mRNA + beta-nicotinamide D-ribonucleotide + 2 H(+). The enzyme catalyses NAD(+) + H2O = beta-nicotinamide D-ribonucleotide + AMP + 2 H(+). It catalyses the reaction NADH + H2O = reduced beta-nicotinamide D-ribonucleotide + AMP + 2 H(+). In terms of biological role, mRNA decapping enzyme that specifically removes the nicotinamide adenine dinucleotide (NAD) cap from a subset of mRNAs by hydrolyzing the diphosphate linkage to produce nicotinamide mononucleotide (NMN) and 5' monophosphate mRNA. The NAD-cap is present at the 5'-end of some mRNAs and stabilizes RNA against 5'-processing. Has preference for mRNAs with a 5'-end purine. Catalyzes the hydrolysis of a broad range of dinucleotide pyrophosphates. This Deinococcus radiodurans (strain ATCC 13939 / DSM 20539 / JCM 16871 / CCUG 27074 / LMG 4051 / NBRC 15346 / NCIMB 9279 / VKM B-1422 / R1) protein is NAD-capped RNA hydrolase NudC.